The primary structure comprises 275 residues: Transcription factor JUNGBRUNNEN 1 (275 aa).

Residues 1-24 form a disordered region; sequence MSGEGNLGKDHEEENEAPLPGFRF. The NAC domain occupies 18 to 167; that stretch reads PLPGFRFHPT…VWTLCRIFKR (150 aa). Residues 115–173 mediate DNA binding; it reads VGLKKSLVYYLGSAGKGTKTDWMMHEFRLPSTTKTDSPAQQAEVWTLCRIFKRVTSQRN. Residues 191-219 are disordered; sequence CSKTSSLDSDHTSHRTVDSMSHEPPLPQP. Over residues 198-211 the composition is skewed to basic and acidic residues; sequence DSDHTSHRTVDSMS.

As to expression, expressed in roots, root caps, cotyledons, tips and margin of young leaves, senescent regions of fully expanded leaves and floral tissues, including old sepals, petals, staments, mature anthers and pollen grains. Not detected in the abscission zone of open flowers, emerging lateral roots and root meristematic zones.

Its subcellular location is the nucleus. Its function is as follows. Transcription factor that binds to the 5'- RRYGCCGT-3' consensus core sequence. Central longevity regulator. Negative regulator of leaf senescence. Modulates cellular H(2)O(2) levels and enhances tolerance to various abiotic stresses through the regulation of DREB2A. The chain is Transcription factor JUNGBRUNNEN 1 (JUB1) from Arabidopsis thaliana (Mouse-ear cress).